A 69-amino-acid polypeptide reads, in one-letter code: UPF0435 protein SH1076 (69 aa).

This sequence belongs to the UPF0435 family.

In Staphylococcus haemolyticus (strain JCSC1435), this protein is UPF0435 protein SH1076.